Here is a 613-residue protein sequence, read N- to C-terminus: MLAGEASMRSPILACWQPILLLMLGSILSGSATGCPPRCECSAQERAVLCHRKRFMVVPEGIPTETRQLDLGKNRIKTLNQDEFANYPHLEELELNENIISAIEPGAFNNLFNLRTLGLRSNRLKLIPLGVFTGLSNLTKLDISENKIVILLDYMFQDLYNLKSLEVGDNDLVYISHRAFSGLNSLEQLTLEKCNLTSIPTEALSHLHGLIVLRLRHLNINAIRDYSFKRLYRLKVLEISHWPYLDTMTSNCLYGLNLTSLSITHCNLTSIPYVSVRHLVYLRFLNLSYNPIVTIEGSMLHDLLRLQEIQLVGGQLTTVEPFAFRGLNYLRILNVSGNLLTTLEESAFHSVGNLETLILDNNPLACDCRLLWVFRRRWRLNFNKQQPTCSTPEFVQGKEFKDFPDVLLPNYFTCRRARIRDRKPQQIFVDEGHTVHFVCRADGDPPPAIMWLSPRKHLISTKTNGRLTVFPDGTLEVRYAQIQDNGTYLCIASNAGGNDTMLAHLHVRSYSPDWPHQPNKTFAFISNQPNESDANSTRATVPFPFDIKTLIIATTMGFISFLGVVLFCLVLLFLWSRGKGNTKHNIEIEYVPRKSDAGISSADAPRKFNMKMI.

Positions 1–34 (MLAGEASMRSPILACWQPILLLMLGSILSGSATG) are cleaved as a signal peptide. 2 cysteine pairs are disulfide-bonded: Cys35-Cys41 and Cys39-Cys50. An LRRNT domain is found at 35-64 (CPPRCECSAQERAVLCHRKRFMVVPEGIPT). At 35–554 (CPPRCECSAQ…FDIKTLIIAT (520 aa)) the chain is on the extracellular side. 11 LRR repeats span residues 65-86 (ETRQ…EFAN), 89-110 (HLEE…AFNN), 113-134 (NLRT…VFTG), 137-158 (NLTK…MFQD), 161-182 (NLKS…AFSG), 185-206 (SLEQ…ALSH), 209-230 (GLIV…SFKR), 257-278 (NLTS…SVRH), 281-302 (YLRF…MLHD), 305-326 (RLQE…AFRG), and 329-350 (YLRI…AFHS). Asn137 carries N-linked (GlcNAc...) asparagine glycosylation. Residue Asn195 is glycosylated (N-linked (GlcNAc...) asparagine). N-linked (GlcNAc...) asparagine glycans are attached at residues Asn257, Asn267, and Asn286. An N-linked (GlcNAc...) asparagine glycan is attached at Asn334. One can recognise an LRRCT domain in the interval 362–416 (NPLACDCRLLWVFRRRWRLNFNKQQPTCSTPEFVQGKEFKDFPDVLLPNYFTCRR). 3 cysteine pairs are disulfide-bonded: Cys366–Cys389, Cys368–Cys414, and Cys439–Cys490. Residues 404–508 (PDVLLPNYFT…DTMLAHLHVR (105 aa)) enclose the Ig-like C2-type domain. N-linked (GlcNAc...) asparagine glycosylation is found at Asn485, Asn498, Asn519, Asn530, and Asn535. The helical transmembrane segment at 555–575 (TMGFISFLGVVLFCLVLLFLW) threads the bilayer. Topologically, residues 576–613 (SRGKGNTKHNIEIEYVPRKSDAGISSADAPRKFNMKMI) are cytoplasmic.

As to quaternary structure, homotetramer. Forms ternary complex with RTN4R/NGFR and RTN4R/TNFRSF19. Post-translationally, N-glycosylated. Contains predominantly high-mannose glycans.

The protein localises to the cell membrane. In terms of biological role, functional component of the Nogo receptor signaling complex (RTN4R/NGFR) in RhoA activation responsible for some inhibition of axonal regeneration by myelin-associated factors. Is also an important negative regulator of oligodentrocyte differentiation and axonal myelination. The sequence is that of Leucine-rich repeat and immunoglobulin-like domain-containing nogo receptor-interacting protein 1 (LINGO1) from Gallus gallus (Chicken).